A 113-amino-acid chain; its full sequence is Probable protein L3 (113 aa).

This is Probable protein L3 from Bos taurus (Bovine).